We begin with the raw amino-acid sequence, 214 residues long: Probable chorismate pyruvate-lyase (214 aa).

Positions 74, 112, and 173 each coordinate substrate. A disordered region spans residues 183–214 (AAPENTGAGGTRLPRRIDTHHTPSKQEERPES). A compositionally biased stretch (basic and acidic residues) spans 197–214 (RRIDTHHTPSKQEERPES).

This sequence belongs to the UbiC family.

It is found in the cytoplasm. It catalyses the reaction chorismate = 4-hydroxybenzoate + pyruvate. Its pathway is cofactor biosynthesis; ubiquinone biosynthesis. Functionally, removes the pyruvyl group from chorismate, with concomitant aromatization of the ring, to provide 4-hydroxybenzoate (4HB) for the ubiquinone pathway. The chain is Probable chorismate pyruvate-lyase from Cupriavidus metallidurans (strain ATCC 43123 / DSM 2839 / NBRC 102507 / CH34) (Ralstonia metallidurans).